The following is a 71-amino-acid chain: Mitochondrial import protein 1 (71 aa).

Residues 22–44 traverse the membrane as a helical segment; sequence YAAINLGLPFLNGVMLGFGEIFA.

Belongs to the MIM1 family. As to quaternary structure, component of the mitochondrial outer import machinery (MIM) complex containing at least mim1 and mim2. Interacts with mim2. Interacts with mitophagy receptor atg43.

It is found in the mitochondrion outer membrane. Component of the mitochondrial outer import machinery (MIM) complex that mediates transport of proteins into mitochondrial compartments. Promotes the insertion of tom70 into the outer mitochondrial membrane. Promotes the insertion of atg43 into the outer mitochondrial membrane. The MIM complex cooperates with the receptor tom70 in binding of precursor proteins and promotes their insertion and assembly into the outer membrane. Involved in import of the subset of proteins with multiple alpha-helical transmembrane segments. Required for the assembly of the TOM (translocase of outer membrane) receptor complex, which is responsible for the recognition and translocation of cytosolically synthesized mitochondrial preproteins. This chain is Mitochondrial import protein 1, found in Schizosaccharomyces pombe (strain 972 / ATCC 24843) (Fission yeast).